The following is a 188-amino-acid chain: Large ribosomal subunit protein eL18 (188 aa).

Residue Lys119 forms a Glycyl lysine isopeptide (Lys-Gly) (interchain with G-Cter in SUMO2) linkage. At Ser130 the chain carries Phosphoserine. Positions 150 to 188 (RHFGKAPGTPHSHTKPYVRSKGRKFERARGRRASRGYKN) are disordered. Position 158 is a phosphothreonine (Thr158). Composition is skewed to basic residues over residues 161–171 (SHTKPYVRSKG) and 178–188 (RGRRASRGYKN). Residue Lys164 forms a Glycyl lysine isopeptide (Lys-Gly) (interchain with G-Cter in SUMO2) linkage.

Belongs to the eukaryotic ribosomal protein eL18 family. Component of the large ribosomal subunit.

The protein resides in the cytoplasm. It is found in the cytosol. Its subcellular location is the rough endoplasmic reticulum. In terms of biological role, component of the large ribosomal subunit. The ribosome is a large ribonucleoprotein complex responsible for the synthesis of proteins in the cell. The sequence is that of Large ribosomal subunit protein eL18 (RPL18) from Bos taurus (Bovine).